The following is a 378-amino-acid chain: Chaperone protein DnaJ (378 aa).

In terms of domain architecture, J spans 5–70; the sequence is DYYEVLGVGR…NKKAAYDQFG (66 aa). Residues 134-212 form a CR-type zinc finger; that stretch reads GLTKELRIPT…CHGDGRVEKT (79 aa). Cys147, Cys150, Cys164, Cys167, Cys186, Cys189, Cys200, and Cys203 together coordinate Zn(2+). CXXCXGXG motif repeat units follow at residues 147–154, 164–171, 186–193, and 200–207; these read CDVCDGSG, CTTCHGQG, CPTCHGRG, and CAKCHGDG.

Belongs to the DnaJ family. Homodimer. Requires Zn(2+) as cofactor.

The protein resides in the cytoplasm. Its function is as follows. Participates actively in the response to hyperosmotic and heat shock by preventing the aggregation of stress-denatured proteins and by disaggregating proteins, also in an autonomous, DnaK-independent fashion. Unfolded proteins bind initially to DnaJ; upon interaction with the DnaJ-bound protein, DnaK hydrolyzes its bound ATP, resulting in the formation of a stable complex. GrpE releases ADP from DnaK; ATP binding to DnaK triggers the release of the substrate protein, thus completing the reaction cycle. Several rounds of ATP-dependent interactions between DnaJ, DnaK and GrpE are required for fully efficient folding. Also involved, together with DnaK and GrpE, in the DNA replication of plasmids through activation of initiation proteins. This Shewanella oneidensis (strain ATCC 700550 / JCM 31522 / CIP 106686 / LMG 19005 / NCIMB 14063 / MR-1) protein is Chaperone protein DnaJ.